The following is a 263-amino-acid chain: Small ribosomal subunit protein eS4 (263 aa).

An S4 RNA-binding domain is found at 42–104 (LPLIIFLRNR…TGEHFRLVYD (63 aa)).

The protein belongs to the eukaryotic ribosomal protein eS4 family. In terms of assembly, component of the small ribosomal subunit.

The protein resides in the cytoplasm. Its function is as follows. Component of the small ribosomal subunit. The ribosome is a large ribonucleoprotein complex responsible for the synthesis of proteins in the cell. This is Small ribosomal subunit protein eS4 (rps4) from Xenopus tropicalis (Western clawed frog).